The primary structure comprises 121 residues: MVDMMDLPRSRINAGMLAQFIDKPVCFVGRLEKIHPTGKMFILSDGEGKNGTIELMEPLDEEISGIVEVVGRVTAKATILCTSYVQFKEDSHPFDLGLYNEAVKIIHDFPQFYPLGIVQHD.

At Val-2 the chain carries N-acetylvaline. Glycyl lysine isopeptide (Lys-Gly) (interchain with G-Cter in ubiquitin) cross-links involve residues Lys-23, Lys-39, and Lys-88.

Belongs to the replication factor A protein 3 family. Component of the canonical replication protein A complex (RPA), a heterotrimer composed of RPA1, RPA2 and RPA3. Also a component of the aRPA, the alternative replication protein A complex, a trimeric complex similar to the replication protein A complex/RPA but where RPA1 and RPA3 are associated with RPA4 instead of RPA2. Interacts with BRIP1/FANCJ via the RPA1 subunit; following DNA damage they colocalize in foci in the nucleus. Ubiquitinated by RFWD3 at stalled replication forks in response to DNA damage: ubiquitination by RFWD3 does not lead to degradation by the proteasome and promotes removal of the RPA complex from stalled replication forks, promoting homologous recombination.

The protein localises to the nucleus. Its function is as follows. As part of the heterotrimeric replication protein A complex (RPA/RP-A), binds and stabilizes single-stranded DNA intermediates that form during DNA replication or upon DNA stress. It prevents their reannealing and in parallel, recruits and activates different proteins and complexes involved in DNA metabolism. Thereby, it plays an essential role both in DNA replication and the cellular response to DNA damage. In the cellular response to DNA damage, the RPA complex controls DNA repair and DNA damage checkpoint activation. Through recruitment of ATRIP activates the ATR kinase a master regulator of the DNA damage response. It is required for the recruitment of the DNA double-strand break repair factors RAD51 and RAD52 to chromatin, in response to DNA damage. Also recruits to sites of DNA damage proteins like XPA and XPG that are involved in nucleotide excision repair and is required for this mechanism of DNA repair. Also plays a role in base excision repair (BER), probably through interaction with UNG. RPA stimulates 5'-3' helicase activity of BRIP1/FANCJ. Also recruits SMARCAL1/HARP, which is involved in replication fork restart, to sites of DNA damage. May also play a role in telomere maintenance. RPA3 has its own single-stranded DNA-binding activity and may be responsible for polarity of the binding of the complex to DNA. As part of the alternative replication protein A complex, aRPA, binds single-stranded DNA and probably plays a role in DNA repair. Compared to the RPA2-containing, canonical RPA complex, may not support chromosomal DNA replication and cell cycle progression through S-phase. The aRPA may not promote efficient priming by DNA polymerase alpha but could support DNA synthesis by polymerase delta in presence of PCNA and replication factor C (RFC), the dual incision/excision reaction of nucleotide excision repair and RAD51-dependent strand exchange. The protein is Replication protein A 14 kDa subunit (RPA3) of Homo sapiens (Human).